A 946-amino-acid chain; its full sequence is Protein translocase subunit SecA (946 aa).

Residues Gln-87, 105–109, and Asp-524 contribute to the ATP site; that span reads GEGKT. Residues 904–933 form a disordered region; it reads PAQTTDKADRDPNKPETWGKVGRNEDCPCG. Zn(2+)-binding residues include Cys-930, Cys-932, Cys-941, and His-942.

This sequence belongs to the SecA family. As to quaternary structure, monomer and homodimer. Part of the essential Sec protein translocation apparatus which comprises SecA, SecYEG and auxiliary proteins SecDF-YajC and YidC. It depends on Zn(2+) as a cofactor.

The protein resides in the cell inner membrane. It is found in the cytoplasm. It catalyses the reaction ATP + H2O + cellular proteinSide 1 = ADP + phosphate + cellular proteinSide 2.. Part of the Sec protein translocase complex. Interacts with the SecYEG preprotein conducting channel. Has a central role in coupling the hydrolysis of ATP to the transfer of proteins into and across the cell membrane, serving both as a receptor for the preprotein-SecB complex and as an ATP-driven molecular motor driving the stepwise translocation of polypeptide chains across the membrane. The chain is Protein translocase subunit SecA from Rhodopseudomonas palustris (strain TIE-1).